The following is a 292-amino-acid chain: Acetylglutamate kinase (292 aa).

Residues 72 to 73 (GG), arginine 94, and asparagine 187 contribute to the substrate site.

The protein belongs to the acetylglutamate kinase family. ArgB subfamily.

It localises to the cytoplasm. The enzyme catalyses N-acetyl-L-glutamate + ATP = N-acetyl-L-glutamyl 5-phosphate + ADP. Its pathway is amino-acid biosynthesis; L-arginine biosynthesis; N(2)-acetyl-L-ornithine from L-glutamate: step 2/4. Its function is as follows. Catalyzes the ATP-dependent phosphorylation of N-acetyl-L-glutamate. This Trichodesmium erythraeum (strain IMS101) protein is Acetylglutamate kinase.